We begin with the raw amino-acid sequence, 330 residues long: Beta-ketoacyl-[acyl-carrier-protein] synthase III (330 aa).

Active-site residues include Cys115 and His255. Residues Gln256–Arg260 are ACP-binding. Asn285 is a catalytic residue.

It belongs to the thiolase-like superfamily. FabH family. In terms of assembly, homodimer.

Its subcellular location is the cytoplasm. It carries out the reaction malonyl-[ACP] + acetyl-CoA + H(+) = 3-oxobutanoyl-[ACP] + CO2 + CoA. Its pathway is lipid metabolism; fatty acid biosynthesis. Catalyzes the condensation reaction of fatty acid synthesis by the addition to an acyl acceptor of two carbons from malonyl-ACP. Catalyzes the first condensation reaction which initiates fatty acid synthesis and may therefore play a role in governing the total rate of fatty acid production. Possesses both acetoacetyl-ACP synthase and acetyl transacylase activities. Its substrate specificity determines the biosynthesis of branched-chain and/or straight-chain of fatty acids. The chain is Beta-ketoacyl-[acyl-carrier-protein] synthase III from Helicobacter pylori (strain G27).